We begin with the raw amino-acid sequence, 289 residues long: ATP synthase gamma chain (289 aa).

It belongs to the ATPase gamma chain family. As to quaternary structure, F-type ATPases have 2 components, CF(1) - the catalytic core - and CF(0) - the membrane proton channel. CF(1) has five subunits: alpha(3), beta(3), gamma(1), delta(1), epsilon(1). CF(0) has three main subunits: a, b and c.

It localises to the cell inner membrane. Its function is as follows. Produces ATP from ADP in the presence of a proton gradient across the membrane. The gamma chain is believed to be important in regulating ATPase activity and the flow of protons through the CF(0) complex. In Azoarcus sp. (strain BH72), this protein is ATP synthase gamma chain.